A 350-amino-acid chain; its full sequence is Phosphoribosylformylglycinamidine cyclo-ligase (350 aa).

This sequence belongs to the AIR synthase family.

It is found in the cytoplasm. The catalysed reaction is 2-formamido-N(1)-(5-O-phospho-beta-D-ribosyl)acetamidine + ATP = 5-amino-1-(5-phospho-beta-D-ribosyl)imidazole + ADP + phosphate + H(+). It participates in purine metabolism; IMP biosynthesis via de novo pathway; 5-amino-1-(5-phospho-D-ribosyl)imidazole from N(2)-formyl-N(1)-(5-phospho-D-ribosyl)glycinamide: step 2/2. This chain is Phosphoribosylformylglycinamidine cyclo-ligase, found in Syntrophotalea carbinolica (strain DSM 2380 / NBRC 103641 / GraBd1) (Pelobacter carbinolicus).